The chain runs to 527 residues: Nucleobase-ascorbate transporter LPE1 (527 aa).

12 helical membrane passes run 43–63 (LVML…MGGG), 68–88 (AIVI…QVHF), 92–112 (LPAV…IILS), 132–152 (LQGA…FGIW), 163–183 (AAVP…FPGV), 189–209 (VGLP…HLFA), 219–239 (AVLV…AAGA), 284–304 (FAML…LIAV), 361–383 (VIKI…AVLA), 387–409 (LPIF…FSLL), 427–447 (LFLG…FGFG), and 458–478 (VMVN…AYLL).

The protein belongs to the nucleobase:cation symporter-2 (NCS2) (TC 2.A.40) family. Highly expressed in roots.

The protein localises to the membrane. Its activity is regulated as follows. Inhibited by excess of xanthin, uric acid and ascorbic acid, and by 100 um N,N-dicyclohexylcarbodiimide and 30 um carbonyl cyanide m-chlorophenyl-hydrazone. Functionally, high affinity uric acid-xanthine transporter in A.nidulans. Binds, but cannot transport ascorbic acid. The chain is Nucleobase-ascorbate transporter LPE1 (LPE1) from Zea mays (Maize).